The primary structure comprises 424 residues: GTPase Obg (424 aa).

The Obg domain maps to Met1–Leu158. The region spanning Ala159–Ser331 is the OBG-type G domain. GTP is bound by residues Gly165–Ser172, Phe190–Lys194, Asp212–Gly215, Asn282–Asp285, and Ser312–Ala314. The Mg(2+) site is built by Ser172 and Thr192. Residues Arg345 to Leu424 form the OCT domain.

This sequence belongs to the TRAFAC class OBG-HflX-like GTPase superfamily. OBG GTPase family. In terms of assembly, monomer. Mg(2+) serves as cofactor.

It localises to the cytoplasm. In terms of biological role, an essential GTPase which binds GTP, GDP and possibly (p)ppGpp with moderate affinity, with high nucleotide exchange rates and a fairly low GTP hydrolysis rate. Plays a role in control of the cell cycle, stress response, ribosome biogenesis and in those bacteria that undergo differentiation, in morphogenesis control. This is GTPase Obg from Clostridium botulinum (strain Okra / Type B1).